Here is a 118-residue protein sequence, read N- to C-terminus: MARVKRGVVARARHKKILKQAKGYYGARSRVYRVAFQAVIKAGQYAYRDRRQRKRQFRQLWIARINAAARTNGISYSRFINGLKKASIEIDRKILADIAVFDKAVFAALVEKAKTALA.

The protein belongs to the bacterial ribosomal protein bL20 family.

Binds directly to 23S ribosomal RNA and is necessary for the in vitro assembly process of the 50S ribosomal subunit. It is not involved in the protein synthesizing functions of that subunit. This Erwinia tasmaniensis (strain DSM 17950 / CFBP 7177 / CIP 109463 / NCPPB 4357 / Et1/99) protein is Large ribosomal subunit protein bL20.